Consider the following 198-residue polypeptide: Host transcription reprogramming factor 1 (198 aa).

The N-terminal stretch at 1 to 19 is a signal peptide; the sequence is MQLSNFLSIWALVAMGATA. Disordered regions lie at residues 21–59 and 71–198; these read PMPS…SYHS and ERLA…PVQL. The segment at 58–81 adopts a C2H2-type zinc-finger fold; the sequence is HSCETCAAPFRTEERLAAHRQADH. Composition is skewed to basic and acidic residues over residues 71-80, 104-128, and 167-177; these read ERLAAHRQAD, TSER…RSQE, and KLDKPTRKEQY.

It is found in the secreted. The protein localises to the host nucleus. In terms of biological role, secreted effector that translocates into the nuclei of host cells to reprogram the expression of immunity-associated genes by binding to effector binding elements (EBEs) in rice. Binds the 5'-CAATCTTC-3' EBE of promoters from targeted rice genes and probably recruits a yet to be determined host repressor. Causes ambivalent immunity with increased susceptibility to the hemibiotrophic pathogens Magnaporthe oryzae and Xanthomonas oryzae pv. oryzae, but enhances resistance to Cochliobolus miyabeanus, a necrotrophic pathogen. This chain is Host transcription reprogramming factor 1, found in Pyricularia oryzae (strain 70-15 / ATCC MYA-4617 / FGSC 8958) (Rice blast fungus).